Reading from the N-terminus, the 32-residue chain is U3-theraphotoxin-Hhn1r (32 aa).

Intrachain disulfides connect Cys-2/Cys-15, Cys-9/Cys-20, and Cys-14/Cys-27.

Belongs to the neurotoxin 10 (Hwtx-1) family. 16 (Hntx-8) subfamily. In terms of tissue distribution, expressed by the venom gland.

It is found in the secreted. Ion channel inhibitor. The chain is U3-theraphotoxin-Hhn1r from Cyriopagopus hainanus (Chinese bird spider).